The sequence spans 194 residues: Probable nicotinate-nucleotide adenylyltransferase (194 aa).

This sequence belongs to the NadD family.

It catalyses the reaction nicotinate beta-D-ribonucleotide + ATP + H(+) = deamido-NAD(+) + diphosphate. It participates in cofactor biosynthesis; NAD(+) biosynthesis; deamido-NAD(+) from nicotinate D-ribonucleotide: step 1/1. Functionally, catalyzes the reversible adenylation of nicotinate mononucleotide (NaMN) to nicotinic acid adenine dinucleotide (NaAD). In Brucella suis biovar 1 (strain 1330), this protein is Probable nicotinate-nucleotide adenylyltransferase.